A 79-amino-acid chain; its full sequence is Large ribosomal subunit protein uL24 (79 aa).

It belongs to the universal ribosomal protein uL24 family. Part of the 50S ribosomal subunit.

One of two assembly initiator proteins, it binds directly to the 5'-end of the 23S rRNA, where it nucleates assembly of the 50S subunit. Its function is as follows. One of the proteins that surrounds the polypeptide exit tunnel on the outside of the subunit. In Lactobacillus johnsonii (strain CNCM I-12250 / La1 / NCC 533), this protein is Large ribosomal subunit protein uL24.